A 112-amino-acid chain; its full sequence is DNA-binding protein Bv3F (112 aa).

Residues 65–92 form a disordered region; that stretch reads KRNSKRMSTVPKYRDPATGKTWSGRGRQ. 2 consecutive DNA-binding regions follow at residues 89–94 and 89–95; these read RGRQPA and RGRQPAW.

It belongs to the histone-like protein H-NS family. As to quaternary structure, homodimer that oligomerizes on DNA into higher-order complexes that form bridges between disparate regions of DNA compacting it.

It is found in the cytoplasm. Its subcellular location is the nucleoid. In terms of biological role, a DNA-binding protein implicated in transcriptional repression and chromosome organization and compaction. Binds in the minor groove of AT-rich DNA. Binds nucleation sites in AT-rich DNA and bridges them, forming higher-order nucleoprotein complexes and condensing the chromosome. As many horizontally transferred genes are AT-rich, it plays a central role in silencing foreign genes. The chain is DNA-binding protein Bv3F from Burkholderia vietnamiensis (strain G4 / LMG 22486) (Burkholderia cepacia (strain R1808)).